An 844-amino-acid chain; its full sequence is DNA mismatch repair protein MutS (844 aa).

610 to 617 serves as a coordination point for ATP; that stretch reads GPNMGGKS.

The protein belongs to the DNA mismatch repair MutS family.

Functionally, this protein is involved in the repair of mismatches in DNA. It is possible that it carries out the mismatch recognition step. This protein has a weak ATPase activity. The polypeptide is DNA mismatch repair protein MutS (Francisella tularensis subsp. mediasiatica (strain FSC147)).